Consider the following 139-residue polypeptide: Putative pre-16S rRNA nuclease (139 aa).

It belongs to the YqgF nuclease family.

It is found in the cytoplasm. Functionally, could be a nuclease involved in processing of the 5'-end of pre-16S rRNA. The polypeptide is Putative pre-16S rRNA nuclease (Streptococcus agalactiae serotype Ia (strain ATCC 27591 / A909 / CDC SS700)).